We begin with the raw amino-acid sequence, 146 residues long: PSVQGAAAQLTADVKKDLRDSWKVIGSDKKGNGVALMTTLFADNQETIGYFKRLGNVSQGMANDKLRGHSITLMYALQNFIDQLDNTDDLVCVVEKFAVNHITRKISAAEFGKINGPIKKVLASKNFGDKYANAWAKLVAVVQAAL.

Positions Gln9–Leu146 constitute a Globin domain. His101 lines the heme b pocket.

This sequence belongs to the globin family. As to quaternary structure, homodimer.

It localises to the cytoplasm. In Anadara broughtonii (Blood clam), this protein is Globin-1.